The following is a 353-amino-acid chain: Rhodopsin (353 aa).

Residues 1–36 are Extracellular-facing; the sequence is MNGTEGPYFYIPMVNTTGIVRSPYEYPQYYLVNPAA. 2 N-linked (GlcNAc...) asparagine glycosylation sites follow: Asn2 and Asn15. A helical membrane pass occupies residues 37 to 61; the sequence is YAALGAYMFLLILVGFPVNFLTLYV. The Cytoplasmic portion of the chain corresponds to 62 to 73; that stretch reads TLEHKKLRTPLN. Residues 74-96 form a helical membrane-spanning segment; that stretch reads YILLNLAVADLFMVLGGFTTTMY. Topologically, residues 97 to 110 are extracellular; it reads TSMHGYFVLGRLGC. Cys110 and Cys187 are joined by a disulfide. A helical membrane pass occupies residues 111-133; sequence NVEGFFATLGGEIALWSLVVLAI. Residues 134 to 136 carry the 'Ionic lock' involved in activated form stabilization motif; the sequence is ERW. The Cytoplasmic segment spans residues 134-152; that stretch reads ERWVVVCKPISNFRFSEDH. The helical transmembrane segment at 153–173 threads the bilayer; it reads AIMGLAFTWVMASACAVPPLV. The Extracellular segment spans residues 174-202; sequence GWSRYIPEGMQCSCGIDYYTRAEGFNNES. Asn200 is a glycosylation site (N-linked (GlcNAc...) asparagine). Residues 203-224 form a helical membrane-spanning segment; sequence FVIYMFVCHFLIPLVVVFFCYG. At 225–252 the chain is on the cytoplasmic side; that stretch reads RLLCAVKEAAAAQQESETTQRAEREVSR. The chain crosses the membrane as a helical span at residues 253–274; the sequence is MVVIMVVAFLVCWCPYAGVAWY. Residues 275 to 286 lie on the Extracellular side of the membrane; that stretch reads IFTHQGSEFGPL. Residues 287 to 308 traverse the membrane as a helical segment; the sequence is FMTFPAFFAKSSSIYNPMIYIC. An N6-(retinylidene)lysine modification is found at Lys296. Residues 309–353 are Cytoplasmic-facing; sequence MNKQFRHCMITTLCCGKNPFEEEEGASTTSKTEASSVSSSSVSPA. S-palmitoyl cysteine attachment occurs at residues Cys322 and Cys323. The disordered stretch occupies residues 330-353; sequence EEEGASTTSKTEASSVSSSSVSPA. Residues 334–353 show a composition bias toward low complexity; that stretch reads ASTTSKTEASSVSSSSVSPA.

The protein belongs to the G-protein coupled receptor 1 family. Opsin subfamily. Post-translationally, phosphorylated on some or all of the serine and threonine residues present in the C-terminal region. In terms of processing, contains one covalently linked retinal chromophore.

The protein resides in the membrane. Its subcellular location is the cell projection. It is found in the cilium. It localises to the photoreceptor outer segment. Its function is as follows. Photoreceptor required for image-forming vision at low light intensity. While most salt water fish species use retinal as chromophore, most freshwater fish use 3-dehydroretinal, or a mixture of retinal and 3-dehydroretinal. Light-induced isomerization of 11-cis to all-trans retinal triggers a conformational change that activates signaling via G-proteins. Subsequent receptor phosphorylation mediates displacement of the bound G-protein alpha subunit by arrestin and terminates signaling. The protein is Rhodopsin (rho) of Chelon labrosus (Thicklip grey mullet).